Here is a 70-residue protein sequence, read N- to C-terminus: Small ribosomal subunit protein bS21 (70 aa).

This sequence belongs to the bacterial ribosomal protein bS21 family.

This chain is Small ribosomal subunit protein bS21, found in Nitrosomonas eutropha (strain DSM 101675 / C91 / Nm57).